Consider the following 346-residue polypeptide: D-alanine--D-alanine ligase (346 aa).

Positions 133 to 327 (KLYAKSVGVK…TLADQIPLEK (195 aa)) constitute an ATP-grasp domain. 159 to 211 (LRFPCIIKPARLGSSIGISIVKDEKDLEYAKDVGFEFDNDLVVEEFKNNIKEY) serves as a coordination point for ATP. Mg(2+)-binding residues include aspartate 284, glutamate 296, and asparagine 298.

Belongs to the D-alanine--D-alanine ligase family. Mg(2+) is required as a cofactor. It depends on Mn(2+) as a cofactor.

The protein localises to the cytoplasm. It catalyses the reaction 2 D-alanine + ATP = D-alanyl-D-alanine + ADP + phosphate + H(+). It functions in the pathway cell wall biogenesis; peptidoglycan biosynthesis. In terms of biological role, cell wall formation. The polypeptide is D-alanine--D-alanine ligase (Campylobacter jejuni subsp. doylei (strain ATCC BAA-1458 / RM4099 / 269.97)).